Consider the following 201-residue polypeptide: NAD(P)H dehydrogenase (quinone) (201 aa).

One can recognise a Flavodoxin-like domain in the interval 4–191 (VLVLYYSMYG…KIAKCQGVHV (188 aa)). Residues 10–15 (SMYGHV) and 79–81 (TRF) each bind FMN. Tyr-12 is a binding site for NAD(+). Trp-99 serves as a coordination point for substrate. Residues 114–120 (STGTQHG) and His-135 each bind FMN.

This sequence belongs to the WrbA family. FMN serves as cofactor.

The catalysed reaction is a quinone + NADH + H(+) = a quinol + NAD(+). It carries out the reaction a quinone + NADPH + H(+) = a quinol + NADP(+). The chain is NAD(P)H dehydrogenase (quinone) from Hydrogenovibrio crunogenus (strain DSM 25203 / XCL-2) (Thiomicrospira crunogena).